The primary structure comprises 239 residues: LexA repressor (239 aa).

Residues 26-46 (FDEMKDALDLASKSGIHRLIT) constitute a DNA-binding region (H-T-H motif). Active-site for autocatalytic cleavage activity residues include Ser159 and Lys197.

Belongs to the peptidase S24 family. As to quaternary structure, homodimer.

The catalysed reaction is Hydrolysis of Ala-|-Gly bond in repressor LexA.. In terms of biological role, represses a number of genes involved in the response to DNA damage (SOS response), including recA and lexA. In the presence of single-stranded DNA, RecA interacts with LexA causing an autocatalytic cleavage which disrupts the DNA-binding part of LexA, leading to derepression of the SOS regulon and eventually DNA repair. This chain is LexA repressor, found in Rhizobium etli (strain CIAT 652).